The sequence spans 155 residues: Ribonuclease H (155 aa).

In terms of domain architecture, RNase H type-1 spans 1–142 (MLKQVEIFTD…CDELARAAAM (142 aa)). Mg(2+) is bound by residues aspartate 10, glutamate 48, aspartate 70, and aspartate 134.

Belongs to the RNase H family. Monomer. Mg(2+) serves as cofactor.

Its subcellular location is the cytoplasm. It catalyses the reaction Endonucleolytic cleavage to 5'-phosphomonoester.. Endonuclease that specifically degrades the RNA of RNA-DNA hybrids. The chain is Ribonuclease H from Escherichia coli O127:H6 (strain E2348/69 / EPEC).